Consider the following 244-residue polypeptide: Phosphate propanoyltransferase (244 aa).

Residue 52-54 (ISA) participates in CoA binding. Residues H56 and H58 each coordinate Zn(2+). A CoA-binding site is contributed by R106. R112 provides a ligand contact to phosphate. Residues E118, H166, H168, and H214 each coordinate Zn(2+). A CoA-binding site is contributed by N221.

Belongs to the PduL family. Full-length protein forms large oligomers. Possible homotrimer and monomer, when purified in the absence of the encapsulation peptide (EP, residues 1-20). The EP may influence oligomerization. Zn(2+) serves as cofactor.

The protein localises to the bacterial microcompartment. It catalyses the reaction propanoyl-CoA + phosphate = propanoyl phosphate + CoA. Its function is as follows. Part of a bacterial microcompartment (BMC) locus required for growth on plant and algal sugars, including L-fucose and L-rhamnose. Thought to be active on lactyl-CoA in a lactaldehyde-degradation pathway. CoA is regenerated within the BMC via this enzyme, although there must also be cofactor transport across the BMC. Directly targeted to the BMC. This chain is Phosphate propanoyltransferase, found in Planctopirus limnophila (strain ATCC 43296 / DSM 3776 / IFAM 1008 / Mu 290) (Planctomyces limnophilus).